We begin with the raw amino-acid sequence, 284 residues long: Acetylglutamate kinase (284 aa).

Residues 66 to 67, Arg88, and Asn179 each bind substrate; that span reads GG.

The protein belongs to the acetylglutamate kinase family. ArgB subfamily.

It localises to the cytoplasm. The catalysed reaction is N-acetyl-L-glutamate + ATP = N-acetyl-L-glutamyl 5-phosphate + ADP. It functions in the pathway amino-acid biosynthesis; L-arginine biosynthesis; N(2)-acetyl-L-ornithine from L-glutamate: step 2/4. Functionally, catalyzes the ATP-dependent phosphorylation of N-acetyl-L-glutamate. The polypeptide is Acetylglutamate kinase (Actinobacillus pleuropneumoniae serotype 7 (strain AP76)).